A 237-amino-acid chain; its full sequence is Phosphatidylserine decarboxylase proenzyme (237 aa).

Ser-206 functions as the Schiff-base intermediate with substrate; via pyruvic acid in the catalytic mechanism. Ser-206 carries the pyruvic acid (Ser); by autocatalysis modification.

This sequence belongs to the phosphatidylserine decarboxylase family. PSD-A subfamily. As to quaternary structure, heterodimer of a large membrane-associated beta subunit and a small pyruvoyl-containing alpha subunit. Pyruvate is required as a cofactor. Is synthesized initially as an inactive proenzyme. Formation of the active enzyme involves a self-maturation process in which the active site pyruvoyl group is generated from an internal serine residue via an autocatalytic post-translational modification. Two non-identical subunits are generated from the proenzyme in this reaction, and the pyruvate is formed at the N-terminus of the alpha chain, which is derived from the carboxyl end of the proenzyme. The post-translation cleavage follows an unusual pathway, termed non-hydrolytic serinolysis, in which the side chain hydroxyl group of the serine supplies its oxygen atom to form the C-terminus of the beta chain, while the remainder of the serine residue undergoes an oxidative deamination to produce ammonia and the pyruvoyl prosthetic group on the alpha chain.

The protein localises to the cell membrane. It carries out the reaction a 1,2-diacyl-sn-glycero-3-phospho-L-serine + H(+) = a 1,2-diacyl-sn-glycero-3-phosphoethanolamine + CO2. It functions in the pathway phospholipid metabolism; phosphatidylethanolamine biosynthesis; phosphatidylethanolamine from CDP-diacylglycerol: step 2/2. Catalyzes the formation of phosphatidylethanolamine (PtdEtn) from phosphatidylserine (PtdSer). In Rhodococcus jostii (strain RHA1), this protein is Phosphatidylserine decarboxylase proenzyme.